Here is a 488-residue protein sequence, read N- to C-terminus: MEQYTIKFNQINHKLTDLRSLNIDHLYAYQFEKIALIGGNGTGKTTLLNMIAQKTKPESGTVETNGEIQYFEQLNMDVENDFNTLDGSLMSELHIPMHTTDSMSGGEKAKYKLANVISNYSPILLLDEPTNHLDKIGKDYLNNILKYYYGTLIIVSHDRALIDQIADTIWDIQEDGTIRVFKGNYTQYQNQYEQEQLEQQRKYEQYISEKQRLSQASKAKRNQAQQMAQASSKQKNKSIAPDRLSASKEKGTVEKAAQKQAKHIEKRMEHLEEVEKPQSYHEFNFPQNKIYDIHNNYPIIAQNLTLVKGSQKLLTQVRFQIPYGKNIALVGANGVGKTTLLEAIYHQIEGIDCSPKVQMAYYRQLAYEDMRDVSLLQYLMDETDSSESFSRAILNNLGLNEALERSCNVLSGGERTKLSLAVLFSTKANMLILDEPTNFLDIKTLEALEMFMNKYPGIILFTSHDTRFVKHVSDKKWELTGQSIHDIT.

The ABC transporter 1 domain maps to 6–199; it reads IKFNQINHKL…NQYEQEQLEQ (194 aa). Position 38-45 (38-45) interacts with ATP; that stretch reads GGNGTGKT. Residues 200 to 298 form a Q-linker, rich in Glu and hydrophilic AA region; the sequence is QRKYEQYISE…KIYDIHNNYP (99 aa). Residues 211–255 form a disordered region; sequence QRLSQASKAKRNQAQQMAQASSKQKNKSIAPDRLSASKEKGTVEK. A compositionally biased stretch (low complexity) spans 222–233; the sequence is NQAQQMAQASSK. Residues 245–255 are compositionally biased toward basic and acidic residues; that stretch reads SASKEKGTVEK. Residues 299–487 enclose the ABC transporter 2 domain; that stretch reads IIAQNLTLVK…ELTGQSIHDI (189 aa). ATP is bound at residue 331–338; the sequence is GANGVGKT.

Belongs to the ABC transporter superfamily.

Functionally, confers resistance to 14-membered ring macrolides (like erythromycin) and to B streptogramins, by acting as an ATP-dependent efflux pump. The polypeptide is Erythromycin resistance ATP-binding protein MsrA (msrA) (Staphylococcus epidermidis).